A 151-amino-acid chain; its full sequence is Nascent polypeptide-associated complex subunit beta (151 aa).

Disordered stretches follow at residues 1 to 38 (MDPS…AADD) and 123 to 151 (KVSE…DEQD). Over residues 20 to 29 (TPRRKVKKPS) the composition is skewed to basic residues. Positions 35–100 (AADDKKVQGA…AEEKTLSEIL (66 aa)) constitute an NAC-A/B domain.

It belongs to the NAC-beta family. In terms of assembly, part of the nascent polypeptide-associated complex (NAC), consisting of ucp15 and btf3. NAC associates with ribosomes via btf3.

The protein resides in the cytoplasm. The protein localises to the nucleus. Functionally, component of the nascent polypeptide-associated complex (NAC), a dynamic component of the ribosomal exit tunnel, protecting the emerging polypeptides from interaction with other cytoplasmic proteins to ensure appropriate nascent protein targeting. The NAC complex also promotes mitochondrial protein import by enhancing productive ribosome interactions with the outer mitochondrial membrane and blocks the inappropriate interaction of ribosomes translating non-secretory nascent polypeptides with translocation sites in the membrane of the endoplasmic reticulum. EGD1 may act as a transcription factor that exert a negative effect on the expression of several genes that are transcribed by RNA polymerase II. The chain is Nascent polypeptide-associated complex subunit beta (btf3) from Schizosaccharomyces pombe (strain 972 / ATCC 24843) (Fission yeast).